The chain runs to 278 residues: Large ribosomal subunit protein uL2 (278 aa).

The disordered stretch occupies residues 223-278; it reads RGSAMNPNDHPHGGGEGKAPVGRKAPMTPWGKKALGVKTRNKKKASTKLIVRRRTK. Basic residues predominate over residues 261 to 278; it reads TRNKKKASTKLIVRRRTK.

The protein belongs to the universal ribosomal protein uL2 family. As to quaternary structure, part of the 50S ribosomal subunit. Forms a bridge to the 30S subunit in the 70S ribosome.

One of the primary rRNA binding proteins. Required for association of the 30S and 50S subunits to form the 70S ribosome, for tRNA binding and peptide bond formation. It has been suggested to have peptidyltransferase activity; this is somewhat controversial. Makes several contacts with the 16S rRNA in the 70S ribosome. The chain is Large ribosomal subunit protein uL2 from Spiroplasma kunkelii.